The chain runs to 62 residues: Small EDRK-rich factor 1 (62 aa).

2 stretches are compositionally biased toward basic and acidic residues: residues 1-30 (MARGNQRELARQKNMKKSQEISKGKRKEDS) and 50-62 (AANERKSMQTREK). The disordered stretch occupies residues 1–62 (MARGNQRELA…ERKSMQTREK (62 aa)).

Belongs to the SERF family. In terms of assembly, interacts with SNCA; this interaction promotes the aggregation of SNCA.

Its subcellular location is the cytoplasm. It localises to the cytosol. The protein resides in the nucleus. In terms of biological role, positive regulator of amyloid protein aggregation and proteotoxicity. Induces conformational changes in amyloid proteins, such as APP, HTT, and SNCA, driving them into compact formations preceding the formation of aggregates. This Bos taurus (Bovine) protein is Small EDRK-rich factor 1 (SERF1).